Here is a 91-residue protein sequence, read N- to C-terminus: Small ribosomal subunit protein bS18 (91 aa).

The disordered stretch occupies residues 1–21 (MSDERAPQRSTGPRKKRPFQR). Residues 12-21 (GPRKKRPFQR) show a composition bias toward basic residues.

It belongs to the bacterial ribosomal protein bS18 family. In terms of assembly, part of the 30S ribosomal subunit. Forms a tight heterodimer with protein bS6.

Binds as a heterodimer with protein bS6 to the central domain of the 16S rRNA, where it helps stabilize the platform of the 30S subunit. This chain is Small ribosomal subunit protein bS18, found in Geotalea daltonii (strain DSM 22248 / JCM 15807 / FRC-32) (Geobacter daltonii).